The following is a 253-amino-acid chain: DNA repair protein RecO (253 aa).

This sequence belongs to the RecO family.

Its function is as follows. Involved in DNA repair and RecF pathway recombination. This Dehalococcoides mccartyi (strain ATCC BAA-2100 / JCM 16839 / KCTC 5957 / BAV1) protein is DNA repair protein RecO.